The following is a 510-amino-acid chain: Facilitated glucose transporter protein 1 (510 aa).

Positions 1–29 are disordered; it reads MSEKSRSDTSATASLSDSSKSPSSYSTPG. Over 1–46 the chain is Cytoplasmic; sequence MSEKSRSDTSATASLSDSSKSPSSYSTPGTTTQKIIFPDGKLTKCL. The span at 8 to 29 shows a compositional bias: low complexity; sequence DTSATASLSDSSKSPSSYSTPG. A helical membrane pass occupies residues 47–67; sequence AFSAFVITLASFQFGYHIGCV. Residues 68–100 lie on the Extracellular side of the membrane; that stretch reads NAPGGLITEWIIGSHKDLFDKELSRENADLAWS. A helical transmembrane segment spans residues 101–121; sequence VAVSVFAVGGMIGGLSSGWLA. Topologically, residues 122–127 are cytoplasmic; that stretch reads DKVGRR. A helical transmembrane segment spans residues 128 to 146; sequence GALFYNNLLALAAAALMGL. Residues 147–160 lie on the Extracellular side of the membrane; sequence AKSVGAYPMVILGR. Residues 161 to 181 traverse the membrane as a helical segment; it reads LIIGLNCGFSSALVPMFLTEI. Residues 182 to 195 are Cytoplasmic-facing; it reads SPNNLRGMLGSLHQ. Residue Gln195 participates in D-glucose binding. A helical membrane pass occupies residues 196 to 216; sequence LLVTIAILVSQIFGLPHLLGT. Topologically, residues 217–219 are extracellular; the sequence is GDR. Residues 220 to 240 traverse the membrane as a helical segment; that stretch reads WPLIFAFTVVPAVLQLALLML. The Cytoplasmic portion of the chain corresponds to 241 to 299; the sequence is CPESPKYTMAVRGQRNEAESALKKLRDTEDVSTEIEAMQEEATAAGVQEKPKMGDMFKG. A helical membrane pass occupies residues 300–320; it reads ALLWPMSIAIMMMLAQQLSGI. D-glucose-binding positions include 315–316, Asn321, and Asn352; that span reads QQ. At 321 to 341 the chain is on the extracellular side; the sequence is NVAMFYSTVIFRGAGLTGNEP. Residues 342-362 form a helical membrane-spanning segment; that stretch reads FYATIGMGAVNVIMTLISVWL. Topologically, residues 363–373 are cytoplasmic; it reads VDHPKFGRRSL. The helical transmembrane segment at 374-394 threads the bilayer; it reads LLAGLTGMFVSTLLLVGALTI. Residues 395–409 lie on the Extracellular side of the membrane; sequence QNSGGDKWASYSAIG. A helical membrane pass occupies residues 410-430; sequence FVLLFVISFATGPGAIPWFFV. Trp427 serves as a coordination point for D-glucose. At 431 to 445 the chain is on the cytoplasmic side; that stretch reads SEIFDSSARGNANSI. The helical transmembrane segment at 446–464 threads the bilayer; it reads AVMVNWAANLLVGLTFLPI. At 465 to 470 the chain is on the extracellular side; it reads NNLMQQ. The chain crosses the membrane as a helical span at residues 471–491; the sequence is YSFFIFSGFLAFFIFYTWKFV. Over 492-510 the chain is Cytoplasmic; it reads PETKGKSIEQIQAEFEKRK.

This sequence belongs to the major facilitator superfamily. Sugar transporter (TC 2.A.1.1) family. Glucose transporter subfamily. In terms of tissue distribution, isoform a is expressed in pharyngeal muscle and intestinal cells in both embryos and adults (at protein level).

The protein resides in the cell membrane. It is found in the basolateral cell membrane. In terms of biological role, facilitative glucose transporter that plays a role in glucose metabolism and regulation of longevity. May also play a role in lipid metabolism. Glucose transport activity of isoform a is competitively inhibited by mannose, galactose and fructose, suggesting ability to transport also other hexose sugars. The polypeptide is Facilitated glucose transporter protein 1 (Caenorhabditis elegans).